Here is a 921-residue protein sequence, read N- to C-terminus: Inner nuclear membrane protein Man1 (921 aa).

Residues 7-51 enclose the LEM domain; the sequence is AAAPQQLSDEELFSQLRRYGLSPGPVTESTRPVYLKKLKKLREEE. The residue at position 28 (Ser28) is a Phosphoserine. Disordered regions lie at residues 47-97, 136-357, and 374-395; these read LREE…AYLR, SSDE…GGCG, and LAPLLSPPSPDGDSTLESPTGP. Composition is skewed to low complexity over residues 53 to 62 and 72 to 85; these read QQQQQQQQQQ and TRNSNNNNTATAMG. A phosphoserine mark is found at Ser136, Ser137, and Ser140. Over residues 217 to 237 the composition is skewed to acidic residues; that stretch reads AAEDADEELADGEDRDPEAEE. Ser261, Ser263, and Ser287 each carry phosphoserine. The segment covering 263–275 has biased composition (acidic residues); that stretch reads SEEEEEEGEEDGD. Residues 308 to 317 show a composition bias toward polar residues; the sequence is SGGSRQETSV. The span at 348–357 shows a compositional bias: gly residues; the sequence is PGGGGGGGCG. Ser412 is modified (phosphoserine). 2 helical membrane passes run 486 to 506 and 637 to 657; these read MFLLTAACLFFLILGLTYLGM and AFITVTHRLLLLCLGVVLVCV. An interaction with SMAD1, SMAD2, SMAD3 and SMAD5 region spans residues 709-921; that stretch reads VRDSLIQPQD…TGLANSQGSS (213 aa). Residues 717–736 mediate DNA binding; it reads QDRKKMKKVWDRAVDFLAAN. Ser787 bears the Phosphoserine mark. At Thr893 the chain carries Phosphothreonine. Ser921 carries the post-translational modification Phosphoserine.

In terms of assembly, interacts with SMAD1, SMAD2, SMAD3 and SMAD5. Binds to both phosphorylated and unphosphorylated R-SMADS.

The protein localises to the nucleus inner membrane. Its function is as follows. Can function as a specific repressor of TGF-beta, activin, and BMP signaling through its interaction with the R-SMAD proteins. Antagonizes TGF-beta-induced cell proliferation arrest. The sequence is that of Inner nuclear membrane protein Man1 (Lemd3) from Mus musculus (Mouse).